Here is a 763-residue protein sequence, read N- to C-terminus: Thiamine biosynthesis multifunctional protein ThiED (763 aa).

A thiamine-phosphate synthase region spans residues methionine 1–leucine 210. 4-amino-2-methyl-5-(diphosphooxymethyl)pyrimidine contacts are provided by residues glutamine 37–lysine 41 and asparagine 69. 2 residues coordinate Mg(2+): aspartate 70 and aspartate 88. Serine 107 serves as a coordination point for 4-amino-2-methyl-5-(diphosphooxymethyl)pyrimidine. Residue threonine 140–threonine 142 participates in 2-[(2R,5Z)-2-carboxy-4-methylthiazol-5(2H)-ylidene]ethyl phosphate binding. Residue lysine 143 coordinates 4-amino-2-methyl-5-(diphosphooxymethyl)pyrimidine. 2-[(2R,5Z)-2-carboxy-4-methylthiazol-5(2H)-ylidene]ethyl phosphate is bound by residues glycine 174 and valine 194–serine 195. Positions leucine 245–glycine 500 are hydroxymethylpyrimidine/phosphomethylpyrimidine kinase. Residue glutamine 282 participates in 4-amino-5-hydroxymethyl-2-methylpyrimidine binding. Residues phenylalanine 550–serine 763 are thiaminase-2.

It in the N-terminal section; belongs to the thiamine-phosphate synthase family. The protein in the central section; belongs to the ThiD family. This sequence in the C-terminal section; belongs to the thiaminase-2 family. Requires Mg(2+) as cofactor.

It catalyses the reaction 2-[(2R,5Z)-2-carboxy-4-methylthiazol-5(2H)-ylidene]ethyl phosphate + 4-amino-2-methyl-5-(diphosphooxymethyl)pyrimidine + 2 H(+) = thiamine phosphate + CO2 + diphosphate. It carries out the reaction 2-(2-carboxy-4-methylthiazol-5-yl)ethyl phosphate + 4-amino-2-methyl-5-(diphosphooxymethyl)pyrimidine + 2 H(+) = thiamine phosphate + CO2 + diphosphate. The enzyme catalyses 4-methyl-5-(2-phosphooxyethyl)-thiazole + 4-amino-2-methyl-5-(diphosphooxymethyl)pyrimidine + H(+) = thiamine phosphate + diphosphate. The catalysed reaction is 4-amino-5-hydroxymethyl-2-methylpyrimidine + ATP = 4-amino-2-methyl-5-(phosphooxymethyl)pyrimidine + ADP + H(+). It catalyses the reaction 4-amino-2-methyl-5-(phosphooxymethyl)pyrimidine + ATP = 4-amino-2-methyl-5-(diphosphooxymethyl)pyrimidine + ADP. The protein operates within cofactor biosynthesis; thiamine diphosphate biosynthesis; 4-amino-2-methyl-5-diphosphomethylpyrimidine from 5-amino-1-(5-phospho-D-ribosyl)imidazole: step 3/3. It functions in the pathway cofactor biosynthesis; thiamine diphosphate biosynthesis; thiamine phosphate from 4-amino-2-methyl-5-diphosphomethylpyrimidine and 4-methyl-5-(2-phosphoethyl)-thiazole: step 1/1. In terms of biological role, condenses 4-methyl-5-(beta-hydroxyethyl)thiazole monophosphate (THZ-P) and 2-methyl-4-amino-5-hydroxymethyl pyrimidine pyrophosphate (HMP-PP) to form thiamine monophosphate (TMP). Catalyzes the phosphorylation of hydroxymethylpyrimidine phosphate (HMP-P) to HMP-PP, and of HMP to HMP-P. This Corynebacterium glutamicum (strain ATCC 13032 / DSM 20300 / JCM 1318 / BCRC 11384 / CCUG 27702 / LMG 3730 / NBRC 12168 / NCIMB 10025 / NRRL B-2784 / 534) protein is Thiamine biosynthesis multifunctional protein ThiED (theD).